The following is an 830-amino-acid chain: Penicillin-binding protein 1A (830 aa).

Residues 1 to 17 (MTERKREHKDRKQKKNS) are compositionally biased toward basic residues. The segment at 1-20 (MTERKREHKDRKQKKNSPKN) is disordered. Topologically, residues 1 to 30 (MTERKREHKDRKQKKNSPKNQSKVTKFLKW) are cytoplasmic. Residues 31–51 (FFIGILLLGITAVTVVGIYVL) traverse the membrane as a helical; Signal-anchor for type II membrane protein segment. At 52-830 (SIIRSSPELD…QNGQNNNITQ (779 aa)) the chain is on the extracellular side. The transglycosylase stretch occupies residues 72-244 (SILYDDQGNF…PTSYDGLSEA (173 aa)). E111 acts as the Proton donor; for transglycosylase activity in catalysis. Residues 378–663 (ASATIIDYKT…TSPIFGKIMG (286 aa)) form a transpeptidase region. The active-site Acyl-ester intermediate; for transpeptidase activity is the S417. A disordered region spans residues 731–830 (APDTNDNNNS…QNGQNNNITQ (100 aa)). The span at 735 to 746 (NDNNNSGANEGN) shows a compositional bias: low complexity. Residues 747–758 (KQQETKPEEVKP) show a composition bias toward basic and acidic residues. 2 stretches are compositionally biased toward low complexity: residues 759-807 (NENN…NTNN) and 816-830 (GNNQNQNGQNNNITQ).

It in the N-terminal section; belongs to the glycosyltransferase 51 family. In the C-terminal section; belongs to the transpeptidase family.

The protein resides in the cell membrane. It carries out the reaction [GlcNAc-(1-&gt;4)-Mur2Ac(oyl-L-Ala-gamma-D-Glu-L-Lys-D-Ala-D-Ala)](n)-di-trans,octa-cis-undecaprenyl diphosphate + beta-D-GlcNAc-(1-&gt;4)-Mur2Ac(oyl-L-Ala-gamma-D-Glu-L-Lys-D-Ala-D-Ala)-di-trans,octa-cis-undecaprenyl diphosphate = [GlcNAc-(1-&gt;4)-Mur2Ac(oyl-L-Ala-gamma-D-Glu-L-Lys-D-Ala-D-Ala)](n+1)-di-trans,octa-cis-undecaprenyl diphosphate + di-trans,octa-cis-undecaprenyl diphosphate + H(+). The enzyme catalyses Preferential cleavage: (Ac)2-L-Lys-D-Ala-|-D-Ala. Also transpeptidation of peptidyl-alanyl moieties that are N-acyl substituents of D-alanine.. Its pathway is cell wall biogenesis; peptidoglycan biosynthesis. Cell wall formation. Synthesis of cross-linked peptidoglycan from the lipid intermediates. The enzyme has a penicillin-insensitive transglycosylase N-terminal domain (formation of linear glycan strands) and a penicillin-sensitive transpeptidase C-terminal domain (cross-linking of the peptide subunits). The sequence is that of Penicillin-binding protein 1A (pbpA) from Clostridium perfringens (strain ATCC 13124 / DSM 756 / JCM 1290 / NCIMB 6125 / NCTC 8237 / Type A).